Here is a 182-residue protein sequence, read N- to C-terminus: uncharacterized protein (182 aa).

Transmembrane regions (helical) follow at residues 29–49 (IISGLFLGLALLSTYLIAGLP) and 63–83 (FYFPFFMTIGFINLIISMLTL).

It is found in the cell membrane. This is an uncharacterized protein from Ureaplasma parvum serovar 3 (strain ATCC 700970).